Reading from the N-terminus, the 147-residue chain is Large ribosomal subunit protein uL22c (147 aa).

This sequence belongs to the universal ribosomal protein uL22 family. Part of the 50S ribosomal subunit.

It is found in the plastid. This protein binds specifically to 23S rRNA. Functionally, the globular domain of the protein is located near the polypeptide exit tunnel on the outside of the subunit, while an extended beta-hairpin is found that lines the wall of the exit tunnel in the center of the 70S ribosome. This Cuscuta obtusiflora (Peruvian dodder) protein is Large ribosomal subunit protein uL22c (rpl22).